The chain runs to 336 residues: NEDD4 family-interacting protein 2 (336 aa).

Disordered regions lie at residues 1–24 and 37–156; these read MARR…RGAP and SAAA…SITV. The Cytoplasmic segment spans residues 1 to 231; the sequence is MARRRSQRVC…ADQLRVGNDG (231 aa). Positions 37-48 are enriched in low complexity; sequence SAAAAGATGSEE. The span at 78–99 shows a compositional bias: basic and acidic residues; sequence EHGEDSLSRKPDPEPGRMDHHQ. The segment at 148–151 is interaction with NEDD4; that stretch reads PPPY. Positions 148-151 match the PPxY motif 1 motif; it reads PPPY. Phosphotyrosine; by SRC occurs at positions 151, 167, 171, and 177. 2 consecutive short sequence motifs (PPxY motif) follow at residues 174-177 and 184-186; these read PPPY and PTY. The chain crosses the membrane as a helical span at residues 232-252; that stretch reads IFMLAFFMAFIFNWLGFCLSF. Over 253-257 the chain is Extracellular; that stretch reads CITNT. A helical transmembrane segment spans residues 258–278; it reads IAGRYGAICGFGLSLIKWILI. The Cytoplasmic segment spans residues 279-287; sequence VRFSDYFTG. The chain crosses the membrane as a helical span at residues 288-308; that stretch reads YFNGQYWLWWIFLVLGLLLFF. Residues 309-336 are Extracellular-facing; the sequence is RGFVNYLKVRNMSESMAAAHRTRYFFLL.

Forms heterodimers with NDFIP1. Interacts with HECT domain-containing E3 ubiquitin-protein ligases, including NEDD4. Interacts with NEDD4L. Interacts with PTEN. When phosphorylated at Tyr-167, interacts with SRC and LYN SH2 domain. May thus act as a scaffold that recruits SRC to NDFIP1, enhancing NDFIP1 phosphorylation. Interacts with SLC11A2/DMT1. May interact with phosphorylated EGFR. Interacts with KCNH2. In terms of processing, ubiquitinated by NEDD4 and ITCH. Also ubiquitinated by NEDD4L. Ubiquitination by NEDD4 or NEDD4L does not affect turnover. Undergoes transient tyrosine-phosphorylation following EGF stimulation, most probably catalyzed by SRC. Phosphorylation on Tyr-151, Tyr-171 and Tyr-177 are dependent on the phosphorylation on Tyr-167. Also phosphorylated by LYN and FYN. As to expression, expressed in brain, lung, heart, skeletal muscle, kidney, liver and placenta.

It is found in the endosome membrane. The protein localises to the golgi apparatus membrane. The protein resides in the endosome. Its subcellular location is the multivesicular body membrane. Activates HECT domain-containing E3 ubiquitin-protein ligases, including ITCH, NEDD4, NEDD4L, SMURF2, WWP1 and WWP2, and consequently modulates the stability of their targets. As a result, may control many cellular processes. Recruits ITCH, NEDD4 and SMURF2 to endosomal membranes. Negatively regulates KCNH2 potassium channel activity by decreasing its cell-surface expression and interfering with channel maturation through recruitment of NEDD4L to the Golgi apparatus and multivesicular body where it mediates KCNH2 degradation. May modulate EGFR signaling. Together with NDFIP1, limits the cytokine signaling and expansion of effector Th2 T-cells by promoting degradation of JAK1, probably by ITCH- and NEDD4L-mediated ubiquitination. The polypeptide is NEDD4 family-interacting protein 2 (NDFIP2) (Homo sapiens (Human)).